Here is a 741-residue protein sequence, read N- to C-terminus: Subtilisin-like protease SBT4.4 (741 aa).

Residues 1–24 form the signal peptide; sequence MAKGTTFIFLFSSLLVLSLSSVSA. Residues 25 to 112 constitute a propeptide, activation peptide; sequence DKDDHGDQQV…VFPSRKLKLQ (88 aa). One can recognise an Inhibitor I9 domain in the interval 34 to 111; that stretch reads VYIVYLGSLP…SVFPSRKLKL (78 aa). Residues 116 to 589 enclose the Peptidase S8 domain; it reads SWNFMGLKEG…SGHVDPIDAI (474 aa). Aspartate 144 serves as the catalytic Charge relay system. Asparagine 175 and asparagine 195 each carry an N-linked (GlcNAc...) asparagine glycan. Histidine 204 functions as the Charge relay system in the catalytic mechanism. Residues asparagine 227 and asparagine 357 are each glycosylated (N-linked (GlcNAc...) asparagine). Residues 359-445 enclose the PA domain; that stretch reads TNYPLVYGKS…LSNDDYKSLV (87 aa). Asparagine 449 carries an N-linked (GlcNAc...) asparagine glycan. Serine 528 (charge relay system) is an active-site residue. N-linked (GlcNAc...) asparagine glycosylation is found at asparagine 565, asparagine 610, asparagine 623, and asparagine 654.

Belongs to the peptidase S8 family. In terms of processing, the C-terminal propeptide is autocleaved.

It localises to the secreted. This chain is Subtilisin-like protease SBT4.4, found in Arabidopsis thaliana (Mouse-ear cress).